A 422-amino-acid polypeptide reads, in one-letter code: L-2-hydroxyglutarate dehydrogenase (422 aa).

This sequence belongs to the L2HGDH family. The cofactor is FAD.

The protein localises to the cell inner membrane. The catalysed reaction is (S)-2-hydroxyglutarate + a quinone = a quinol + 2-oxoglutarate. The protein operates within amino-acid degradation. Functionally, catalyzes the dehydrogenation of L-2-hydroxyglutarate (L2HG) to alpha-ketoglutarate and couples to the respiratory chain by feeding electrons from the reaction into the membrane quinone pool. Functions in a L-lysine degradation pathway that proceeds via cadaverine, glutarate and L-2-hydroxyglutarate. This chain is L-2-hydroxyglutarate dehydrogenase, found in Escherichia coli (strain K12).